The following is a 107-amino-acid chain: UPF0145 protein LVIS_1527 (107 aa).

Belongs to the UPF0145 family.

This Levilactobacillus brevis (strain ATCC 367 / BCRC 12310 / CIP 105137 / JCM 1170 / LMG 11437 / NCIMB 947 / NCTC 947) (Lactobacillus brevis) protein is UPF0145 protein LVIS_1527.